The chain runs to 77 residues: Putative defensin-like protein 120 (77 aa).

An N-terminal signal peptide occupies residues 1 to 26 (MTQKATILAIFMVVLVLGLETKETQG). Intrachain disulfides connect C30–C75, C39–C60, C44–C69, and C48–C71.

It belongs to the DEFL family.

It is found in the secreted. The sequence is that of Putative defensin-like protein 120 (LCR56) from Arabidopsis thaliana (Mouse-ear cress).